The sequence spans 518 residues: Serine hydroxymethyltransferase, mitochondrial (518 aa).

Residues 1 to 31 (MAMAMALRKLSSSVNKSSRPLFSASSLYYKS) constitute a mitochondrion transit peptide. Lysine 287 carries the N6-(pyridoxal phosphate)lysine modification.

Belongs to the SHMT family. As to quaternary structure, homotetramer. Pyridoxal 5'-phosphate serves as cofactor.

Its subcellular location is the mitochondrion. It catalyses the reaction (6R)-5,10-methylene-5,6,7,8-tetrahydrofolate + glycine + H2O = (6S)-5,6,7,8-tetrahydrofolate + L-serine. It functions in the pathway one-carbon metabolism; tetrahydrofolate interconversion. Its function is as follows. Catalyzes the interconversion of serine and glycine. This chain is Serine hydroxymethyltransferase, mitochondrial, found in Pisum sativum (Garden pea).